Reading from the N-terminus, the 134-residue chain is Galectin-1 (134 aa).

Position 1 is an N-acetylalanine (Ala-1). One can recognise a Galectin domain in the interval 4–134; that stretch reads GVAVTNLNLK…GLAFKSITTE (131 aa). A beta-D-galactoside-binding positions include 45–49, His-53, Asn-62, and 69–72; these read HFNAR and WGSE.

Homodimer.

Its subcellular location is the secreted. The protein resides in the extracellular space. It is found in the extracellular matrix. May regulate cell apoptosis and cell differentiation. Binds beta-galactoside and a wide array of complex carbohydrates. This Rhinella arenarum (Argentine common toad) protein is Galectin-1.